A 177-amino-acid polypeptide reads, in one-letter code: ATP synthase subunit delta (177 aa).

It belongs to the ATPase delta chain family. As to quaternary structure, F-type ATPases have 2 components, F(1) - the catalytic core - and F(0) - the membrane proton channel. F(1) has five subunits: alpha(3), beta(3), gamma(1), delta(1), epsilon(1). F(0) has three main subunits: a(1), b(2) and c(10-14). The alpha and beta chains form an alternating ring which encloses part of the gamma chain. F(1) is attached to F(0) by a central stalk formed by the gamma and epsilon chains, while a peripheral stalk is formed by the delta and b chains.

The protein localises to the cell inner membrane. In terms of biological role, f(1)F(0) ATP synthase produces ATP from ADP in the presence of a proton or sodium gradient. F-type ATPases consist of two structural domains, F(1) containing the extramembraneous catalytic core and F(0) containing the membrane proton channel, linked together by a central stalk and a peripheral stalk. During catalysis, ATP synthesis in the catalytic domain of F(1) is coupled via a rotary mechanism of the central stalk subunits to proton translocation. Its function is as follows. This protein is part of the stalk that links CF(0) to CF(1). It either transmits conformational changes from CF(0) to CF(1) or is implicated in proton conduction. The sequence is that of ATP synthase subunit delta from Colwellia psychrerythraea (strain 34H / ATCC BAA-681) (Vibrio psychroerythus).